The chain runs to 244 residues: Na(+)-translocating NADH-quinone reductase subunit E (244 aa).

Transmembrane regions (helical) follow at residues 11 to 31 (LLGIFLQATFIQNILLSTFLG), 50 to 70 (MSVALVLTITGSINWLVHYFI), 90 to 110 (FLELIMFIVVIAAFTQILEVL), 123 to 143 (GIFLPLIAVNCAILGGVLFGI), 153 to 173 (VVFSLGSGCGWWLAIVLFATI), and 191 to 211 (ISFITTGLMAMAFMGLTGIDI). Positions 222-236 (VTNIATDSPQPNTHS) are enriched in polar residues. Positions 222 to 244 (VTNIATDSPQPNTHSSSEEPKAS) are disordered.

Belongs to the NqrDE/RnfAE family. In terms of assembly, composed of six subunits; NqrA, NqrB, NqrC, NqrD, NqrE and NqrF.

It localises to the cell inner membrane. It catalyses the reaction a ubiquinone + n Na(+)(in) + NADH + H(+) = a ubiquinol + n Na(+)(out) + NAD(+). Functionally, NQR complex catalyzes the reduction of ubiquinone-1 to ubiquinol by two successive reactions, coupled with the transport of Na(+) ions from the cytoplasm to the periplasm. NqrA to NqrE are probably involved in the second step, the conversion of ubisemiquinone to ubiquinol. This chain is Na(+)-translocating NADH-quinone reductase subunit E, found in Chlamydia trachomatis serovar A (strain ATCC VR-571B / DSM 19440 / HAR-13).